Here is a 212-residue protein sequence, read N- to C-terminus: uncharacterized protein (212 aa).

The protein belongs to the mimivirus R683/R861 family.

This is an uncharacterized protein from Acanthamoeba polyphaga (Amoeba).